A 42-amino-acid polypeptide reads, in one-letter code: uncharacterized protein (42 aa).

A helical membrane pass occupies residues 15 to 37; sequence PLILAVDCAIIIPNTNFIHSFLI.

It localises to the membrane. This is an uncharacterized protein from Dictyostelium discoideum (Social amoeba).